The sequence spans 141 residues: Protein X (141 aa).

Residues 24–48 (QSSGPSFPRPAAGSAASSASSPSPS) show a composition bias toward low complexity. The disordered stretch occupies residues 24–52 (QSSGPSFPRPAAGSAASSASSPSPSDESD). A mitochondrial targeting sequence region spans residues 68–113 (PCCLVFTCAELRTMDSTVNFVSWHANRQLGMPSKDLWTPYIKDQLL).

The protein belongs to the orthohepadnavirus protein X family. In terms of assembly, may form homodimer. May interact with host CEBPA, CFLAR, CREB1, DDB1, E4F1, HBXIP, HSPD1/HSP60, NFKBIA, POLR2E and SMAD4. Interacts with host SMC5-SMC6 complex and induces its degradation. Interacts with host TRPC4AP; leading to prevent ubiquitination of TRPC4AP. Interacts with host PLSCR1; this interaction promotes ubiquitination and degradation of HBx and impairs HBx-mediated cell proliferation. A fraction may be phosphorylated in insect cells and HepG2 cells, a human hepatoblastoma cell line. Phosphorylated in vitro by host protein kinase C or mitogen-activated protein kinase. N-acetylated in insect cells.

It is found in the host cytoplasm. Its subcellular location is the host nucleus. The protein resides in the host mitochondrion. Multifunctional protein that plays a role in silencing host antiviral defenses and promoting viral transcription. Does not seem to be essential for HBV infection. May be directly involved in development of cirrhosis and liver cancer (hepatocellular carcinoma). Most of cytosolic activities involve modulation of cytosolic calcium. The effect on apoptosis is controversial depending on the cell types in which the studies have been conducted. May induce apoptosis by localizing in mitochondria and causing loss of mitochondrial membrane potential. May also modulate apoptosis by binding host CFLAR, a key regulator of the death-inducing signaling complex (DISC). Promotes viral transcription by using the host E3 ubiquitin ligase DDB1 to target the SMC5-SMC6 complex to proteasomal degradation. This host complex would otherwise bind to viral episomal DNA, and prevents its transcription. Moderately stimulates transcription of many different viral and cellular transcription elements. Promoters and enhancers stimulated by HBx contain DNA binding sites for NF-kappa-B, AP-1, AP-2, c-EBP, ATF/CREB, or the calcium-activated factor NF-AT. The polypeptide is Protein X (Woodchuck hepatitis B virus (isolate 7) (WHV)).